A 477-amino-acid chain; its full sequence is Argininosuccinate lyase (477 aa).

The protein belongs to the lyase 1 family. Argininosuccinate lyase subfamily.

It is found in the cytoplasm. The catalysed reaction is 2-(N(omega)-L-arginino)succinate = fumarate + L-arginine. It functions in the pathway amino-acid biosynthesis; L-arginine biosynthesis; L-arginine from L-ornithine and carbamoyl phosphate: step 3/3. The chain is Argininosuccinate lyase from Acinetobacter baumannii (strain AB307-0294).